Here is a 217-residue protein sequence, read N- to C-terminus: MKFFLDTANTEDIKHFAELGLVDGVTTNPTLVSREGRDFETVIKEITQIVSGPVSAEVTATKAEEMIAQARNEIKWASNIVVKIPMTEEGLKAVKVLSGEGIKTNVTLVFSVSQGLLAAKAGATYISPFLGRLDDIGGNGIQLVKDLRQVLDTYGFKTEIIAASVRGPQHVQEAALAGADIATIPATVFGKLWSHPLTDKGLASFASDWKAFQATQK.

Lys-83 serves as the catalytic Schiff-base intermediate with substrate.

Belongs to the transaldolase family. Type 3B subfamily.

The protein localises to the cytoplasm. It carries out the reaction D-sedoheptulose 7-phosphate + D-glyceraldehyde 3-phosphate = D-erythrose 4-phosphate + beta-D-fructose 6-phosphate. It participates in carbohydrate degradation; pentose phosphate pathway; D-glyceraldehyde 3-phosphate and beta-D-fructose 6-phosphate from D-ribose 5-phosphate and D-xylulose 5-phosphate (non-oxidative stage): step 2/3. Its function is as follows. Transaldolase is important for the balance of metabolites in the pentose-phosphate pathway. This is Probable transaldolase from Lactiplantibacillus plantarum (strain ATCC BAA-793 / NCIMB 8826 / WCFS1) (Lactobacillus plantarum).